The sequence spans 265 residues: Interleukin-1 alpha (265 aa).

Positions M1–R108 are excised as a propeptide. K78 carries the N6-acetyllysine modification. The nuclear localization signal (NLS) stretch occupies residues K78 to L82. S83 is subject to Phosphoserine. Residues N98 and N137 are each glycosylated (N-linked (GlcNAc...) asparagine).

It belongs to the IL-1 family. As to quaternary structure, monomer. Interacts with TMED10; the interaction mediates the translocation from the cytoplasm into the ERGIC (endoplasmic reticulum-Golgi intermediate compartment) and thereby secretion. Interacts with IL1R1. Interacts with S100A13; this interaction is the first step in the export of IL1A, followed by direct translocation of this complex across the plasma membrane. Acetylated within its nuclear localization sequence, which impacts subcellular localization. Post-translationally, proteolytic processed by CAPN1 in a calcium-dependent manner. Cleavage from 31 kDa precursor to 18 kDa biologically active molecules. In terms of processing, phosphorylated. Phosphorylation greatly enhances susceptibility to digestion and promotes the conversion of pre-IL1A alpha to the biologically active IL1A.

The protein resides in the nucleus. Its subcellular location is the cytoplasm. It localises to the secreted. Its function is as follows. Cytokine constitutively present intracellularly in nearly all resting non-hematopoietic cells that plays an important role in inflammation and bridges the innate and adaptive immune systems. After binding to its receptor IL1R1 together with its accessory protein IL1RAP, forms the high affinity interleukin-1 receptor complex. Signaling involves the recruitment of adapter molecules such as MYD88, IRAK1 or IRAK4. In turn, mediates the activation of NF-kappa-B and the three MAPK pathways p38, p42/p44 and JNK pathways. Within the cell, acts as an alarmin and cell death results in its liberation in the extracellular space after disruption of the cell membrane to induce inflammation and alert the host to injury or damage. In addition to its role as a danger signal, which occurs when the cytokine is passively released by cell necrosis, directly senses DNA damage and acts as signal for genotoxic stress without loss of cell integrity. This is Interleukin-1 alpha (IL1A) from Canis lupus familiaris (Dog).